The sequence spans 1727 residues: Eukaryotic translation initiation factor 4G (1727 aa).

Disordered regions lie at residues 1 to 154 (MSYN…VAAS), 172 to 252 (LMVP…QKSP), 360 to 423 (PQQQ…FAPR), 552 to 581 (ACSLSSSQQPKPSFVSGVPNSSAPPAKSPV), 678 to 736 (VSTT…SVIS), and 784 to 815 (LSSTVPLGHSETHKSAVETNTRRNTSTKGKKK). Residues 25-38 (QQQQQQHRSSSAAG) are compositionally biased toward low complexity. The span at 55–65 (YPDNSSLSSNR) shows a compositional bias: polar residues. The segment covering 79–97 (PRVNLPPVNHPNNHNNGPN) has biased composition (low complexity). Composition is skewed to polar residues over residues 114–124 (TNPTESFNRNT), 131–148 (PTSQSTVMSSKINETPNT), and 191–205 (AQMQQSSLRTASNVP). Composition is skewed to basic and acidic residues over residues 222–236 (LMRKEGHNPSSEKAD) and 379–395 (THPDTHEELRLDRRGDP). 2 stretches are compositionally biased toward polar residues: residues 552 to 562 (ACSLSSSQQPK) and 678 to 692 (VSTTSDAPTSDSVDT). Over residues 699-712 (EGSSHASSEISGSS) the composition is skewed to low complexity. Positions 714–736 (QEKDLKCDNRTASDKLDERSVIS) are enriched in basic and acidic residues. Residues 800–810 (VETNTRRNTST) are compositionally biased toward polar residues. An EIF4E-binding region spans residues 916–928 (TEKKYSRDFLLKF). Disordered stretches follow at residues 977 to 1007 (GARLDRRPSNVAGDDRWTKNQGSLPAGYGGN), 1188 to 1212 (GEKEEEEASRVAEEGQVEQTEEERE), 1336 to 1375 (HRDAAQERQTQANRLSRGPSMNSSGRRGHMEFSSPRGGGG), and 1446 to 1492 (ASNT…QERG). 2 stretches are compositionally biased toward basic and acidic residues: residues 979–994 (RLDRRPSNVAGDDRWT) and 1188–1200 (GEKEEEEASRVAE). Ser985 carries the phosphoserine modification. The 224-residue stretch at 1096 to 1319 (QRQLKSILNK…INAIDLRKNK (224 aa)) folds into the MIF4G domain. Over residues 1202–1211 (GQVEQTEEER) the composition is skewed to acidic residues. Polar residues-rich tracts occupy residues 1342–1360 (ERQTQANRLSRGPSMNSSG) and 1446–1455 (ASNTYQSDAT). Phosphoserine is present on Ser1529. Residues 1539–1663 (QLENLSLSAI…TLTEIGRLIQ (125 aa)) form the MI domain.

This sequence belongs to the eukaryotic initiation factor 4G family. As to quaternary structure, EIF4F is a multi-subunit complex, the composition of which varies with external and internal environmental conditions. It is composed of at least EIF4A, EIF4E and EIF4G. In higher plants two isoforms of EIF4F have been identified, named isoform EIF4F and isoform EIF(iso)4F. Isoform EIF4F has subunits p220 and p26, whereas isoform EIF(iso)4F has subunits p82 and p28.

Functionally, component of the protein complex eIF4F, which is involved in the recognition of the mRNA cap, ATP-dependent unwinding of 5'-terminal secondary structure and recruitment of mRNA to the ribosome. Plays a role in the accumulation of some potyvirus during viral infection. Required for the accumulation of cucumber mosaic virus 3a protein and turnip crinkle virus p28 replication protein during viral infection. These proteins are necessary for cell-to-cell movement of the virus. The protein is Eukaryotic translation initiation factor 4G (EIF4G) of Arabidopsis thaliana (Mouse-ear cress).